The following is a 252-amino-acid chain: Transmembrane ascorbate-dependent reductase CYB561 (252 aa).

Methionine 1 is modified (N-acetylmethionine). Topologically, residues 1-17 (MESPAGRTPAPGALPYY) are cytoplasmic. A helical membrane pass occupies residues 18–38 (VAFSQLLGLTVVAVTGAWLGA). One can recognise a Cytochrome b561 domain in the interval 20–221 (FSQLLGLTVV…FGAVVLYILT (202 aa)). The Vesicular portion of the chain corresponds to 39 to 52 (YRGGIAWESALQFN). A helical transmembrane segment spans residues 53–73 (VHPLCMIIGLVFLQGDALLVY). 3 residues coordinate heme b: histidine 54, arginine 74, and lysine 81. Topologically, residues 74 to 85 (RVFRNEAKRTTK) are cytoplasmic. Lysine 81 and lysine 85 together coordinate L-ascorbate. The chain crosses the membrane as a helical span at residues 86 to 106 (ILHGLLHVLAFVIALVGLVAV). Heme b contacts are provided by residues histidine 88, 117–120 (DLYS), and histidine 122. Residues 107-125 (FDYHRKKGIADLYSLHSWC) are Vesicular-facing. The helical transmembrane segment at 126 to 146 (GILVFVLFLAQWLVGLGFFLF) threads the bilayer. Over 147-159 (PGASFSLRSRYRP) the chain is Cytoplasmic. Arginine 154 provides a ligand contact to L-ascorbate. The helical transmembrane segment at 160-180 (QHVFFGAAIFLLSVGTALLGL) threads the bilayer. Positions 161 and 182 each coordinate heme b. At 181–199 (KEALLFQLGTKYSAFESEG) the chain is on the vesicular side. Residues 200–220 (VLANVLGLLLVAFGAVVLYIL) form a helical membrane-spanning segment. Topologically, residues 221 to 252 (TRADWKRPLQAEEQALSMDFKTLTEGDSPSSQ) are cytoplasmic. Lysine 226 is a heme b binding site. Residues serine 248 and serine 250 each carry the phosphoserine modification.

The cofactor is heme b.

The protein localises to the cytoplasmic vesicle. The protein resides in the secretory vesicle. Its subcellular location is the chromaffin granule membrane. The catalysed reaction is monodehydro-L-ascorbate radical(out) + L-ascorbate(in) = monodehydro-L-ascorbate radical(in) + L-ascorbate(out). Its function is as follows. Transmembrane reductase that uses ascorbate as an electron donor in the cytoplasm and transfers electrons across membranes to reduce monodehydro-L-ascorbate radical in the lumen of secretory vesicles. It is therefore involved the regeneration and homeostasis within secretory vesicles of ascorbate which in turn provides reducing equivalents needed to support the activity of intravesicular enzymes. This chain is Transmembrane ascorbate-dependent reductase CYB561 (CYB561), found in Sus scrofa (Pig).